The following is a 461-amino-acid chain: MFDDKGKYLILGLGKSGQGAVIGLSNFEDCQVAVTDRKNLDDIRDAAAILEEHNVPYLNERESVERLSEFDILVKSPGIPMDNNIITKAKELGMPVIDELELGYQILNYRLTKPEERLIAVTGTNGKTTTTNLIGEFFEASGYSIYVAGNVGLPLSQIACEVTDTDFIVLEVSSFQLEFIKGFRPKVSMILNITPDHLDWHGDLDSYIRAKMNIFKNQTSKDFSVVNVDDETTFGLNRESKGRKLNFSKNSLRTEGSFIEDDHLVINYLDTKTSIIHKHDILLPGEHNLENVLAATTATLPFSISEENIRNTLKAFSGVDHRLELVRELNGVKFINDSKGTNVEASLKAINSFDSMILIAGGKDKGADFSEFAEAIKEKGVKKVYLFGETYKKIASALDKVYYPEYYIVNNLETAVTGAYQDAISGDVVLLSPACASWDMYDSFEKRGNHFKSIVYSLGGE.

Residue 123 to 129 (GTNGKTT) coordinates ATP.

Belongs to the MurCDEF family.

It localises to the cytoplasm. The catalysed reaction is UDP-N-acetyl-alpha-D-muramoyl-L-alanine + D-glutamate + ATP = UDP-N-acetyl-alpha-D-muramoyl-L-alanyl-D-glutamate + ADP + phosphate + H(+). The protein operates within cell wall biogenesis; peptidoglycan biosynthesis. Functionally, cell wall formation. Catalyzes the addition of glutamate to the nucleotide precursor UDP-N-acetylmuramoyl-L-alanine (UMA). This Natranaerobius thermophilus (strain ATCC BAA-1301 / DSM 18059 / JW/NM-WN-LF) protein is UDP-N-acetylmuramoylalanine--D-glutamate ligase.